The sequence spans 62 residues: Small ribosomal subunit protein bS21C (62 aa).

Positions 43–62 (EKSKRKKLALHKQSKRRFRT) are disordered. Over residues 45–62 (SKRKKLALHKQSKRRFRT) the composition is skewed to basic residues.

The protein belongs to the bacterial ribosomal protein bS21 family.

This chain is Small ribosomal subunit protein bS21C, found in Trichormus variabilis (strain ATCC 29413 / PCC 7937) (Anabaena variabilis).